Here is a 342-residue protein sequence, read N- to C-terminus: S-adenosylmethionine:tRNA ribosyltransferase-isomerase (342 aa).

Belongs to the QueA family. Monomer.

It is found in the cytoplasm. The enzyme catalyses 7-aminomethyl-7-carbaguanosine(34) in tRNA + S-adenosyl-L-methionine = epoxyqueuosine(34) in tRNA + adenine + L-methionine + 2 H(+). It participates in tRNA modification; tRNA-queuosine biosynthesis. Its function is as follows. Transfers and isomerizes the ribose moiety from AdoMet to the 7-aminomethyl group of 7-deazaguanine (preQ1-tRNA) to give epoxyqueuosine (oQ-tRNA). This is S-adenosylmethionine:tRNA ribosyltransferase-isomerase from Sulfurimonas denitrificans (strain ATCC 33889 / DSM 1251) (Thiomicrospira denitrificans (strain ATCC 33889 / DSM 1251)).